Consider the following 66-residue polypeptide: Transmembrane protein B66L (66 aa).

An N-terminal signal peptide occupies residues 1–20 (MDIKRALILFLLFLVVLSNA). Topologically, residues 21–40 (FVDYIISNFNHAVTCRKPTY) are extracellular. A helical membrane pass occupies residues 41–61 (FGIVLQGIFLVILFSIVDYLI). Residues 62–66 (NENIL) are Cytoplasmic-facing.

The protein belongs to the asfivirus B66L family.

It localises to the host membrane. In Ornithodoros (relapsing fever ticks), this protein is Transmembrane protein B66L.